Reading from the N-terminus, the 403-residue chain is 26S proteasome regulatory subunit 6B homolog (403 aa).

An N-acetylmethionine modification is found at methionine 1. Residue 191–198 (GPPGTGKT) participates in ATP binding.

The protein belongs to the AAA ATPase family.

Its subcellular location is the cytoplasm. The protein localises to the nucleus. Functionally, the 26S proteasome is involved in the ATP-dependent degradation of ubiquitinated proteins. The regulatory (or ATPase) complex confers ATP dependency and substrate specificity to the 26S complex. In Dictyostelium discoideum (Social amoeba), this protein is 26S proteasome regulatory subunit 6B homolog (psmC4).